Here is a 299-residue protein sequence, read N- to C-terminus: Putative cuticle collagen 155 (299 aa).

The signal sequence occupies residues methionine 1–serine 27. 4 triple-helical region regions span residues glycine 103–proline 132, glycine 151–aspartate 177, glycine 181–glycine 202, and glycine 216–lysine 278. A disordered region spans residues proline 107–lysine 278. Over residues proline 129–proline 161 the composition is skewed to pro residues. Positions glycine 163–glycine 172 are enriched in gly residues. A compositionally biased stretch (low complexity) spans serine 173–alanine 197. Over residues proline 215–proline 233 the composition is skewed to pro residues. A compositionally biased stretch (low complexity) spans proline 250–glutamine 268.

It belongs to the cuticular collagen family. In terms of assembly, collagen polypeptide chains are complexed within the cuticle by disulfide bonds and other types of covalent cross-links.

Functionally, nematode cuticles are composed largely of collagen-like proteins. The cuticle functions both as an exoskeleton and as a barrier to protect the worm from its environment. This chain is Putative cuticle collagen 155 (col-155), found in Caenorhabditis elegans.